Here is a 202-residue protein sequence, read N- to C-terminus: Small ribosomal subunit protein uS4 (202 aa).

Residues S91–D168 enclose the S4 RNA-binding domain.

Belongs to the universal ribosomal protein uS4 family. In terms of assembly, part of the 30S ribosomal subunit. Contacts protein S5. The interaction surface between S4 and S5 is involved in control of translational fidelity.

In terms of biological role, one of the primary rRNA binding proteins, it binds directly to 16S rRNA where it nucleates assembly of the body of the 30S subunit. Its function is as follows. With S5 and S12 plays an important role in translational accuracy. The polypeptide is Small ribosomal subunit protein uS4 (Ehrlichia canis (strain Jake)).